Here is a 326-residue protein sequence, read N- to C-terminus: Structural protein ORF326a (326 aa).

The segment at 1 to 28 (MSTTFRGKKEEEEEEEEEKEEKEEELFN) is disordered. Residues 11–26 (EEEEEEEEKEEKEEEL) are compositionally biased toward acidic residues.

The protein localises to the virion. The chain is Structural protein ORF326a from Acidianus two-tailed virus (ATV).